Here is a 348-residue protein sequence, read N- to C-terminus: Dihydroorotase (348 aa).

Zn(2+) is bound by residues His-14 and His-16. Substrate is bound by residues 16-18 (HLR) and Asn-42. Lys-100, His-137, and His-175 together coordinate Zn(2+). The residue at position 100 (Lys-100) is an N6-carboxylysine. His-137 provides a ligand contact to substrate. Residue Leu-220 participates in substrate binding. Asp-248 lines the Zn(2+) pocket. The active site involves Asp-248. Positions 252 and 264 each coordinate substrate.

Belongs to the metallo-dependent hydrolases superfamily. DHOase family. Class II DHOase subfamily. As to quaternary structure, homodimer. It depends on Zn(2+) as a cofactor.

The catalysed reaction is (S)-dihydroorotate + H2O = N-carbamoyl-L-aspartate + H(+). It functions in the pathway pyrimidine metabolism; UMP biosynthesis via de novo pathway; (S)-dihydroorotate from bicarbonate: step 3/3. Its function is as follows. Catalyzes the reversible cyclization of carbamoyl aspartate to dihydroorotate. This chain is Dihydroorotase, found in Pseudomonas putida (strain ATCC 700007 / DSM 6899 / JCM 31910 / BCRC 17059 / LMG 24140 / F1).